A 351-amino-acid polypeptide reads, in one-letter code: Fe(3+) ions import ATP-binding protein FbpC (351 aa).

In terms of domain architecture, ABC transporter spans 7-241 (LTVKNLNKFF…PNHLETAKFM (235 aa)). Residue 39–46 (GASGCGKT) participates in ATP binding.

The protein belongs to the ABC transporter superfamily. Fe(3+) ion importer (TC 3.A.1.10) family. In terms of assembly, the complex is composed of two ATP-binding proteins (FbpC), two transmembrane proteins (FbpB) and a solute-binding protein (FbpA).

It is found in the cell inner membrane. The catalysed reaction is Fe(3+)(out) + ATP + H2O = Fe(3+)(in) + ADP + phosphate + H(+). In terms of biological role, part of the ABC transporter complex FbpABC involved in Fe(3+) ions import. Responsible for energy coupling to the transport system. This chain is Fe(3+) ions import ATP-binding protein FbpC, found in Haemophilus influenzae (strain 86-028NP).